Reading from the N-terminus, the 134-residue chain is Waprin-Phi1 (134 aa).

The N-terminal stretch at 1–23 (MTLRRGSCPLLLFSLVGLLTTCA) is a signal peptide. 2 consecutive WAP domains span residues 36–82 (VAEK…SCQI) and 83–133 (PDEK…TTAR). 8 disulfide bridges follow: C43–C72, C55–C76, C59–C71, C65–C80, C90–C120, C103–C124, C107–C119, and C113–C129.

Belongs to the venom waprin family. In terms of tissue distribution, expressed by the venom gland.

It localises to the secreted. Functionally, damages membranes of susceptible bacteria. Has no hemolytic activity. Not toxic to mice. Does not inhibit the proteinases elastase and cathepsin G. The chain is Waprin-Phi1 from Philodryas olfersii (Green snake).